A 772-amino-acid polypeptide reads, in one-letter code: Endoplasmic reticulum membrane sensor NFE2L1 (772 aa).

A helical; Signal-anchor for type II membrane protein membrane pass occupies residues 7 to 24 (YLTEGLLQFTILLSLIGV). The segment at 108–148 (DPEGSVSGSQPNSGLALESSSGLQDVTGPDNGVRESETEQG) is disordered. Over residues 113-131 (VSGSQPNSGLALESSSGLQ) the composition is skewed to polar residues. The interval 191 to 199 (VFDYSHRQK) is cholesterol recognition/amino acid consensus (CRAC) region. The N-linked (GlcNAc...) asparagine glycan is linked to N348. Positions 379–383 (SPEVE) are CPD. N412 and N423 each carry an N-linked (GlcNAc...) asparagine glycan. The tract at residues 470–532 (EEEFDSDSGL…AVGYSSDSET (63 aa)) is disordered. The Destruction motif signature appears at 476 to 480 (DSGLS). The segment covering 476-523 (DSGLSLDSSHSPSSLSSSEGSSSSSSSSSSSSSSASSSASSSFSEEGA) has biased composition (low complexity). S528 carries the phosphoserine; by CK2 modification. S599 is modified (phosphoserine; by PKA). One can recognise a bZIP domain in the interval 654 to 717 (LIRDIRRRGK…RQMKQKVQSL (64 aa)). The tract at residues 656–675 (RDIRRRGKNKMAAQNCRKRK) is basic motif. The interval 682–696 (LERDVEDLQRDKARL) is leucine-zipper. Positions 753 to 772 (RTMADQQARRQERKPKDRRK) are disordered. Residues 761–768 (RRQERKPK) carry the Nuclear localization signal motif. Over residues 763 to 772 (QERKPKDRRK) the composition is skewed to basic residues.

This sequence belongs to the bZIP family. CNC subfamily. In terms of assembly, interacts with KEAP1. Interacts (via CPD region) with FBXW7; leading to its ubiquitination and degradation. Interacts with SYVN1/HRD1; leading to its ubiquitination and degradation. Interacts (when ubiquitinated) with DDI2; leading to its cleavage. As to quaternary structure, interacts (via the bZIP domain) with small MAF protein (MAFF, MAFG or MAFK); required for binding to antioxidant response elements (AREs) on DNA. Interacts (via Destruction motif) with BTRC; leading to its ubiquitination and degradation. Interacts with CEBPB; the heterodimer represses expression of DSPP during odontoblast differentiation. Interacts with MOTS-c, a peptide produced by the mitochondrially encoded 12S rRNA MT-RNR1. Post-translationally, cleaved at Leu-104 by the aspartyl protease DDI2 following retrotranslocation, releasing the protein from the endoplasmic reticulum membrane and forming the transcription factor NRF1 that translocates into the nucleus. Ubiquitination is prerequisite for cleavage by aspartyl protease DDI2. In terms of processing, N-glycosylated in normal conditions, when it has a single-pass type II membrane protein topology, with the DNA-binding domain facing the endoplasmic reticulum lumen. Deglycosylated during retrotranslocation to the cytosolic side of the membrane, to have a single-pass type III membrane protein topology with the major part of the protein facing the cytosol. Ubiquitinated by the SCF(FBXW7) complex and SYVN1/HRD1, leading to its degradation by the proteasome. Ubiquitinated during retrotranslocation to the cytosolic side of the membrane: ubiquitination does not lead to degradation and is required for processing by the aspartyl protease DDI2 and subsequent release from the endoplasmic reticulum membrane. Post-translationally, phosphorylation by CK2 at Ser-528 inhibits transcription factor activity, possibly by affecting DNA-binding activity. Phosphorylation at Ser-599 is required for interaction with CEBPB. In terms of processing, ubiquitinated by the SCF(BTRC) complex in the nucleus, leading to its degradation by the proteasome.

It is found in the endoplasmic reticulum membrane. The protein resides in the nucleus. Its function is as follows. Endoplasmic reticulum membrane sensor that translocates into the nucleus in response to various stresses to act as a transcription factor. Constitutes a precursor of the transcription factor NRF1. Able to detect various cellular stresses, such as cholesterol excess, oxidative stress or proteasome inhibition. In response to stress, it is released from the endoplasmic reticulum membrane following cleavage by the protease DDI2 and translocates into the nucleus to form the transcription factor NRF1. Acts as a key sensor of cholesterol excess: in excess cholesterol conditions, the endoplasmic reticulum membrane form of the protein directly binds cholesterol via its CRAC motif, preventing cleavage and release of the transcription factor NRF1, thereby allowing expression of genes promoting cholesterol removal, such as CD36. Involved in proteasome homeostasis: in response to proteasome inhibition, it is released from the endoplasmic reticulum membrane, translocates to the nucleus and activates expression of genes encoding proteasome subunits. In terms of biological role, CNC-type bZIP family transcription factor that translocates to the nucleus and regulates expression of target genes in response to various stresses. Heterodimerizes with small-Maf proteins (MAFF, MAFG or MAFK) and binds DNA motifs including the antioxidant response elements (AREs), which regulate expression of genes involved in oxidative stress response. Activates or represses expression of target genes, depending on the context. Plays a key role in cholesterol homeostasis by acting as a sensor of cholesterol excess: in low cholesterol conditions, translocates into the nucleus and represses expression of genes involved in defense against cholesterol excess, such as CD36. In excess cholesterol conditions, the endoplasmic reticulum membrane form of the protein directly binds cholesterol via its CRAC motif, preventing cleavage and release of the transcription factor NRF1, thereby allowing expression of genes promoting cholesterol removal. Critical for redox balance in response to oxidative stress: acts by binding the AREs motifs on promoters and mediating activation of oxidative stress response genes, such as GCLC, GCLM, GSS, MT1 and MT2. Plays an essential role during fetal liver hematopoiesis: probably has a protective function against oxidative stress and is involved in lipid homeostasis in the liver. Involved in proteasome homeostasis: in response to proteasome inhibition, mediates the 'bounce-back' of proteasome subunits by translocating into the nucleus and activating expression of genes encoding proteasome subunits. Also involved in regulating glucose flux. Together with CEBPB; represses expression of DSPP during odontoblast differentiation. In response to ascorbic acid induction, activates expression of SP7/Osterix in osteoblasts. In Pongo abelii (Sumatran orangutan), this protein is Endoplasmic reticulum membrane sensor NFE2L1.